The following is a 485-amino-acid chain: Probable cobyric acid synthase (485 aa).

The region spanning 250–435 (EVEIAVIRLP…LHGLFDNENI (186 aa)) is the GATase cobBQ-type domain. Cys328 functions as the Nucleophile in the catalytic mechanism. Residue His427 is part of the active site.

This sequence belongs to the CobB/CobQ family. CobQ subfamily.

Its pathway is cofactor biosynthesis; adenosylcobalamin biosynthesis. Catalyzes amidations at positions B, D, E, and G on adenosylcobyrinic A,C-diamide. NH(2) groups are provided by glutamine, and one molecule of ATP is hydrogenolyzed for each amidation. The chain is Probable cobyric acid synthase from Methanosarcina acetivorans (strain ATCC 35395 / DSM 2834 / JCM 12185 / C2A).